Reading from the N-terminus, the 605-residue chain is Glycerophosphodiester phosphodiesterase domain-containing protein 5 (605 aa).

Over 1–42 (MVRHQPLQYYEPQLCLSCLTGIYGCRWKRYQRSHDDTTPWER) the chain is Cytoplasmic. Intrachain disulfides connect Cys-15/Cys-18 and Cys-25/Cys-571. Residues 43–63 (LWFLLLTFTFGLTLTWLYFWW) form a helical membrane-spanning segment. Over 64–89 (EVHNDYDEFNWYLYNRMGYWSDWPVP) the chain is Extracellular. A helical transmembrane segment spans residues 90–110 (ILVTTAAAFAYIAGLLVLALC). At 111–125 (HIAVGQQMNLHWLHK) the chain is on the cytoplasmic side. A helical transmembrane segment spans residues 126–146 (IGLVVILASTVVAMSAVAQLW). Residues 147-160 (EDEWEVLLISLQGT) lie on the Extracellular side of the membrane. The chain crosses the membrane as a helical span at residues 161-181 (APFLHVGAVAAVTMLSWIVAG). Topologically, residues 182-192 (QFARAERTSSQ) are cytoplasmic. Residues 193–213 (VTILCTFFTVVFALYLAPLTI) traverse the membrane as a helical segment. Residues 214–496 (SSPCIMEKKD…PLWIMPPDEY (283 aa)) lie on the Extracellular side of the membrane. The 258-residue stretch at 228 to 485 (PALIGHRGAP…DNSHALSQVP (258 aa)) folds into the GP-PDE domain. 5 N-linked (GlcNAc...) asparagine glycosylation sites follow: Asn-301, Asn-336, Asn-352, Asn-374, and Asn-448. Residues 497 to 517 (CLMWVTADLVSFTLIVGIFVL) traverse the membrane as a helical segment. At 518-605 (QKWRLGGIRS…TKTLIERSGR (88 aa)) the chain is on the cytoplasmic side. The tract at residues 582 to 605 (STATPVGPRGGGSHTKTLIERSGR) is disordered.

This sequence belongs to the glycerophosphoryl diester phosphodiesterase family. In terms of assembly, interacts with PRDX1; forms a mixed-disulfide with PRDX1, leading to disrupt intramolecular disulfide bond between Cys-25 and Cys-571. In terms of processing, intramolecular disulfide bond between Cys-25 and Cys-571 is reduced by PRDX1.

It is found in the endomembrane system. The protein resides in the cytoplasm. The protein localises to the perinuclear region. It localises to the cell projection. Its subcellular location is the growth cone. The catalysed reaction is a 1,2-diacyl-sn-glycero-3-phospho-(1D-myo-inositol-4,5-bisphosphate) + H2O = 1D-myo-inositol 1,4,5-trisphosphate + a 1,2-diacyl-sn-glycerol + H(+). The enzyme catalyses sn-glycerol 3-phosphocholine + H2O = sn-glycerol 3-phosphate + choline + H(+). Its function is as follows. Glycerophosphodiester phosphodiesterase that promotes neurite formation and drives spinal motor neuron differentiation. Mediates the cleavage of glycosylphosphatidylinositol (GPI) anchor of target proteins: removes the GPI-anchor of RECK, leading to release RECK from the plasma membrane. May contribute to the osmotic regulation of cellular glycerophosphocholine. This is Glycerophosphodiester phosphodiesterase domain-containing protein 5 from Homo sapiens (Human).